Here is a 254-residue protein sequence, read N- to C-terminus: Ribosomal RNA small subunit methyltransferase J (254 aa).

Residues 101–102 (RD), 117–118 (ER), 153–154 (SS), and aspartate 171 each bind S-adenosyl-L-methionine.

Belongs to the methyltransferase superfamily. RsmJ family.

The protein resides in the cytoplasm. The catalysed reaction is guanosine(1516) in 16S rRNA + S-adenosyl-L-methionine = N(2)-methylguanosine(1516) in 16S rRNA + S-adenosyl-L-homocysteine + H(+). In terms of biological role, specifically methylates the guanosine in position 1516 of 16S rRNA. This is Ribosomal RNA small subunit methyltransferase J from Enterobacter sp. (strain 638).